Here is a 449-residue protein sequence, read N- to C-terminus: Phosphoglucosamine mutase (449 aa).

The Phosphoserine intermediate role is filled by Ser-100. Mg(2+)-binding residues include Ser-100, Asp-241, Asp-243, and Asp-245. Residue Ser-100 is modified to Phosphoserine.

The protein belongs to the phosphohexose mutase family. Mg(2+) serves as cofactor. In terms of processing, activated by phosphorylation.

It carries out the reaction alpha-D-glucosamine 1-phosphate = D-glucosamine 6-phosphate. Functionally, catalyzes the conversion of glucosamine-6-phosphate to glucosamine-1-phosphate. In Clostridium botulinum (strain ATCC 19397 / Type A), this protein is Phosphoglucosamine mutase.